The chain runs to 144 residues: Phospholipase A2, membrane associated (144 aa).

The N-terminal stretch at M1–G20 is a signal peptide. 7 disulfide bridges follow: C46-C137, C48-C64, C63-C117, C69-C144, C70-C110, C79-C103, and C97-C108. Positions 47, 49, and 51 each coordinate Ca(2+). H67 is a catalytic residue. D68 lines the Ca(2+) pocket. The active site involves D111.

This sequence belongs to the phospholipase A2 family. Requires Ca(2+) as cofactor.

Its subcellular location is the secreted. The protein resides in the cell membrane. It localises to the mitochondrion outer membrane. The enzyme catalyses a 1,2-diacyl-sn-glycero-3-phosphoethanolamine + H2O = a 1-acyl-sn-glycero-3-phosphoethanolamine + a fatty acid + H(+). It carries out the reaction 1-hexadecanoyl-2-(9Z-octadecenoyl)-sn-glycero-3-phosphoethanolamine + H2O = 1-hexadecanoyl-sn-glycero-3-phosphoethanolamine + (9Z)-octadecenoate + H(+). It catalyses the reaction 1-hexadecanoyl-2-(9Z,12Z-octadecadienoyl)-sn-glycero-3-phosphoethanolamine + H2O = 1-hexadecanoyl-sn-glycero-3-phosphoethanolamine + (9Z,12Z)-octadecadienoate + H(+). The catalysed reaction is 1-hexadecanoyl-2-(5Z,8Z,11Z,14Z-eicosatetraenoyl)-sn-glycero-3-phosphoethanolamine + H2O = 1-hexadecanoyl-sn-glycero-3-phosphoethanolamine + (5Z,8Z,11Z,14Z)-eicosatetraenoate + H(+). The enzyme catalyses N-hexadecanoyl-1,2-di-(9Z-octadecenoyl)-sn-glycero-3-phosphoethanolamine + H2O = N-hexadecanoyl-1-(9Z-octadecenoyl)-sn-glycero-3-phosphoethanolamine + (9Z)-octadecenoate + H(+). It carries out the reaction 1,2-dihexadecanoyl-sn-glycero-3-phospho-(1'-sn-glycerol) + H2O = 1-hexadecanoyl-sn-glycero-3-phospho-(1'-sn-glycerol) + hexadecanoate + H(+). It catalyses the reaction 1-hexadecanoyl-2-(9Z-octadecenoyl)-sn-glycero-3-phosphoglycerol + H2O = 1-hexadecanoyl-sn-glycero-3-phosphoglycerol + (9Z)-octadecenoate + H(+). The catalysed reaction is 1-hexadecanoyl-2-(9Z-octadecenoyl)-sn-glycero-3-phospho-(1'-sn-glycerol) + H2O = 1-hexadecanoyl-sn-glycero-3-phospho-(1'-sn-glycerol) + (9Z)-octadecenoate + H(+). The enzyme catalyses a 1,2-diacyl-sn-glycero-3-phosphocholine + H2O = a 1-acyl-sn-glycero-3-phosphocholine + a fatty acid + H(+). It carries out the reaction 1,2-dihexadecanoyl-sn-glycero-3-phosphocholine + H2O = 1-hexadecanoyl-sn-glycero-3-phosphocholine + hexadecanoate + H(+). It catalyses the reaction 1-hexadecanoyl-2-(9Z-octadecenoyl)-sn-glycero-3-phosphocholine + H2O = 1-hexadecanoyl-sn-glycero-3-phosphocholine + (9Z)-octadecenoate + H(+). The catalysed reaction is 1-hexadecanoyl-2-(9Z,12Z-octadecadienoyl)-sn-glycero-3-phosphocholine + H2O = (9Z,12Z)-octadecadienoate + 1-hexadecanoyl-sn-glycero-3-phosphocholine + H(+). The enzyme catalyses 1-hexadecanoyl-2-(4Z,7Z,10Z,13Z,16Z,19Z-docosahexaenoyl)-sn-glycero-3-phosphocholine + H2O = (4Z,7Z,10Z,13Z,16Z,19Z)-docosahexaenoate + 1-hexadecanoyl-sn-glycero-3-phosphocholine + H(+). In terms of biological role, secretory calcium-dependent phospholipase A2 that primarily targets extracellular phospholipids with implications in host antimicrobial defense, inflammatory response and tissue regeneration. Hydrolyzes the ester bond of the fatty acyl group attached at sn-2 position of phospholipids (phospholipase A2 activity) with preference for phosphatidylethanolamines and phosphatidylglycerols over phosphatidylcholines. Contributes to lipid remodeling of cellular membranes and generation of lipid mediators involved in pathogen clearance. Displays bactericidal activity against Gram-positive bacteria by directly hydrolyzing phospholipids of the bacterial membrane. Upon sterile inflammation, targets membrane phospholipids of extracellular mitochondria released from activated platelets, generating free unsaturated fatty acids such as arachidonate that is used by neighboring leukocytes to synthesize inflammatory eicosanoids such as leukotrienes. Simultaneously, by compromising mitochondrial membrane integrity, promotes the release in circulation of potent damage-associated molecular pattern molecules that activate the innate immune response. Plays a stem cell regulator role in the intestinal crypt. Within intracellular compartment mediates Paneth cell differentiation and its stem cell supporting functions by inhibiting Wnt signaling pathway in intestinal stem cell (ICS). Secreted in the intestinal lumen upon inflammation, acts in an autocrine way and promotes prostaglandin E2 synthesis that stimulates Wnt signaling pathway in ICS cells and tissue regeneration. May play a role in the biosynthesis of N-acyl ethanolamines that regulate energy metabolism and inflammation. Hydrolyzes N-acyl phosphatidylethanolamines to N-acyl lysophosphatidylethanolamines, which are further cleaved by a lysophospholipase D to release N-acyl ethanolamines. Independent of its catalytic activity, acts as a ligand for integrins. Binds to and activates integrins ITGAV:ITGB3, ITGA4:ITGB1 and ITGA5:ITGB1. Binds to a site (site 2) which is distinct from the classical ligand-binding site (site 1) and induces integrin conformational changes and enhanced ligand binding to site 1. Induces cell proliferation in an integrin-dependent manner. The sequence is that of Phospholipase A2, membrane associated (PLA2G2A) from Bos taurus (Bovine).